A 369-amino-acid chain; its full sequence is MITTNDALAALCETARTQRALALDTEFVRTRTYYPQLGLIQLYDGENVALIDPLTITEWAPFQALLQDQNITKFLHAGSEDLEVFQNAFGMMPDPFIDTQVLASFVGHPLSCGFATLVEHHTGVALDKSESRTDWLARPLTERQCDYAAADVWYLLPIAHKLMEQVREAGWLTAAINECRLMTQRRGEVLDPDEAWREITNAWQLRPRQLACLKLLAGWRLRKARERDMAVNFVVREENLWKVARHMPGSLGELDGLGLSGSEIRFHGKTLLALVAQAQALLEDALPEPLANLVDMPGYRKVFKEIKALVQETSEAHKISAELMASRRQINQLLNWHWKLKPQNQLPELISGWRGELLGEALKTLLQNY.

The 166-residue stretch at 1–166 (MITTNDALAA…PIAHKLMEQV (166 aa)) folds into the 3'-5' exonuclease domain. In terms of domain architecture, HRDC spans 206–285 (RPRQLACLKL…AQAQALLEDA (80 aa)).

The protein belongs to the RNase D family. It depends on a divalent metal cation as a cofactor.

Its subcellular location is the cytoplasm. It catalyses the reaction Exonucleolytic cleavage that removes extra residues from the 3'-terminus of tRNA to produce 5'-mononucleotides.. Its function is as follows. Exonuclease involved in the 3' processing of various precursor tRNAs. Initiates hydrolysis at the 3'-terminus of an RNA molecule and releases 5'-mononucleotides. In Cronobacter turicensis (strain DSM 18703 / CCUG 55852 / LMG 23827 / z3032), this protein is Ribonuclease D.